A 279-amino-acid chain; its full sequence is Acyl-[acyl-carrier-protein]--UDP-N-acetylglucosamine O-acyltransferase (279 aa).

It belongs to the transferase hexapeptide repeat family. LpxA subfamily. As to quaternary structure, homotrimer.

The protein localises to the cytoplasm. The enzyme catalyses a (3R)-hydroxyacyl-[ACP] + UDP-N-acetyl-alpha-D-glucosamine = a UDP-3-O-[(3R)-3-hydroxyacyl]-N-acetyl-alpha-D-glucosamine + holo-[ACP]. It participates in glycolipid biosynthesis; lipid IV(A) biosynthesis; lipid IV(A) from (3R)-3-hydroxytetradecanoyl-[acyl-carrier-protein] and UDP-N-acetyl-alpha-D-glucosamine: step 1/6. In terms of biological role, involved in the biosynthesis of lipid A, a phosphorylated glycolipid that anchors the lipopolysaccharide to the outer membrane of the cell. The sequence is that of Acyl-[acyl-carrier-protein]--UDP-N-acetylglucosamine O-acyltransferase from Chlamydia pneumoniae (Chlamydophila pneumoniae).